The following is a 701-amino-acid chain: F-box/LRR-repeat protein 17 (701 aa).

Disordered regions lie at residues 73–93, 227–250, and 279–321; these read SAGLEEEPPLSPPPPPPRDGA, GGGGPAGGGASPPRPPDAGCCQAP, and VRAG…IPDI. Pro residues predominate over residues 81 to 90; that stretch reads PLSPPPPPPR. The span at 227 to 236 shows a compositional bias: gly residues; sequence GGGGPAGGGA. Over residues 285–294 the composition is skewed to polar residues; it reads APSSAQQQPE. An F-box domain is found at 318 to 365; sequence IPDINQLPPSILLKIFSNLSLNERCLSASLVCKYWRDLCLDFQFWKQL.

The protein belongs to the FBXL17 family. As to quaternary structure, part of the SCF (SKP1-CUL1-F-box) E3 ubiquitin-protein ligase complex SCF(FBXL17) composed of CUL1, SKP1, RBX1 and FBXL17. Interacts with BTB domain-containing proteins such as KLHL12, BCL6 and BACH1; specifically recognizes and binds a conserved degron of non-consecutive residues present at the interface of BTB dimers of aberrant composition. Interacts with SUFU. Interacts with PRMT1.

It is found in the cytoplasm. It localises to the nucleus. Substrate-recognition component of the SCF(FBXL17) E3 ubiquitin ligase complex, a key component of a quality control pathway required to ensure functional dimerization of BTB domain-containing proteins (dimerization quality control, DQC). FBXL17 specifically recognizes and binds a conserved degron of non-consecutive residues present at the interface of BTB dimers of aberrant composition: aberrant BTB dimer are then ubiquitinated by the SCF(FBXL17) complex and degraded by the proteasome. The ability of the SCF(FBXL17) complex to eliminate compromised BTB dimers is required for the differentiation and survival of neural crest and neuronal cells. The SCF(FBXL17) complex mediates ubiquitination and degradation of BACH1. The SCF(FBXL17) complex is also involved in the regulation of the hedgehog/smoothened (Hh) signaling pathway by mediating the ubiquitination and degradation of SUFU, allowing the release of GLI1 from SUFU for proper Hh signal transduction. The SCF(FBXL17) complex mediates ubiquitination and degradation of PRMT1. The polypeptide is F-box/LRR-repeat protein 17 (Mus musculus (Mouse)).